We begin with the raw amino-acid sequence, 236 residues long: Uridylate kinase (236 aa).

10–13 provides a ligand contact to ATP; sequence KLSG. Glycine 52 is a UMP binding site. ATP contacts are provided by glycine 53 and arginine 57. UMP-binding positions include aspartate 72 and 133 to 140; that span reads TGNPFFTT. 3 residues coordinate ATP: threonine 160, tyrosine 166, and aspartate 169.

It belongs to the UMP kinase family. In terms of assembly, homohexamer.

It is found in the cytoplasm. The enzyme catalyses UMP + ATP = UDP + ADP. It participates in pyrimidine metabolism; CTP biosynthesis via de novo pathway; UDP from UMP (UMPK route): step 1/1. Its activity is regulated as follows. Inhibited by UTP. Catalyzes the reversible phosphorylation of UMP to UDP. The polypeptide is Uridylate kinase (Polaromonas sp. (strain JS666 / ATCC BAA-500)).